The following is a 742-amino-acid chain: Protein-associating with the carboxyl-terminal domain of ezrin (742 aa).

Glycine 2 carries N-myristoyl glycine lipidation. The Protein kinase domain maps to 2–245 (GSENSALKSY…LCTLLSHDFF (244 aa)). 4 HEAT repeats span residues 199-238 (ESLLTILNEQVSADVLSSFQQTLHSTLLNPIPKCRPALCT), 285-323 (LIASRLVPLLLNQLVFAEPVAVKSFLPYLLGPKKDHAQG), 333-370 (LFQSRVIPVLLQLFEVHEEHVRMVLLSHIEAYVEHFTQ), and 372-409 (QLKKVILPQVLLGLRDTSDSIVAITLHSLAVLVSLLGP). Serine 439 carries the phosphoserine modification. Disordered regions lie at residues 506 to 544 (LSDVKNTSEDSENFPSSSKKSEEWPDWSEPEEPENQTVN), 568 to 598 (SSWDDCEPSSLDTKVNPGGGITATKPVTSGE), and 629 to 652 (GDDADQIEPPKVSSQERPLKVPSE). A compositionally biased stretch (acidic residues) spans 529–539 (WPDWSEPEEPE). Positions 548–742 (WPREPCDDVK…GELNWEDNNW (195 aa)) are interaction with EZR. Serine 707 carries the phosphoserine modification. The tract at residues 723 to 742 (EGEAEGWEEEGELNWEDNNW) is disordered.

This sequence belongs to the protein kinase superfamily. Interacts with EZR/VIL2 C-terminal domain. In terms of processing, may be myristoylated; myristoylation may target it to Golgi compartment. Post-translationally, phosphorylated. As to expression, ubiquitously expressed.

Its subcellular location is the cytoplasm. The protein resides in the golgi apparatus. It is found in the cell projection. It localises to the lamellipodium. May play a role in regulating cell adhesion/migration complexes in migrating cells. This chain is Protein-associating with the carboxyl-terminal domain of ezrin (SCYL3), found in Homo sapiens (Human).